The primary structure comprises 153 residues: Ribosome maturation factor RimP (153 aa).

It belongs to the RimP family.

Its subcellular location is the cytoplasm. In terms of biological role, required for maturation of 30S ribosomal subunits. The chain is Ribosome maturation factor RimP from Actinobacillus pleuropneumoniae serotype 5b (strain L20).